A 672-amino-acid polypeptide reads, in one-letter code: uncharacterized protein (672 aa).

The protein belongs to the MG032/MG096/MG288 family.

This is an uncharacterized protein from Mycoplasma pneumoniae (strain ATCC 29342 / M129 / Subtype 1) (Mycoplasmoides pneumoniae).